The chain runs to 179 residues: Large ribosomal subunit protein uL5 (179 aa).

Belongs to the universal ribosomal protein uL5 family. In terms of assembly, part of the 50S ribosomal subunit; part of the 5S rRNA/L5/L18/L25 subcomplex. Contacts the 5S rRNA and the P site tRNA. Forms a bridge to the 30S subunit in the 70S ribosome.

Functionally, this is one of the proteins that bind and probably mediate the attachment of the 5S RNA into the large ribosomal subunit, where it forms part of the central protuberance. In the 70S ribosome it contacts protein S13 of the 30S subunit (bridge B1b), connecting the 2 subunits; this bridge is implicated in subunit movement. Contacts the P site tRNA; the 5S rRNA and some of its associated proteins might help stabilize positioning of ribosome-bound tRNAs. The polypeptide is Large ribosomal subunit protein uL5 (Prochlorococcus marinus (strain MIT 9312)).